Consider the following 141-residue polypeptide: Putative nickel-responsive regulator (141 aa).

4 residues coordinate Ni(2+): His83, His94, His96, and Cys102.

This sequence belongs to the transcriptional regulatory CopG/NikR family. The cofactor is Ni(2+).

Its function is as follows. Transcriptional regulator. This Methanopyrus kandleri (strain AV19 / DSM 6324 / JCM 9639 / NBRC 100938) protein is Putative nickel-responsive regulator.